The sequence spans 127 residues: Fumarate reductase subunit C (127 aa).

The next 3 helical transmembrane spans lie at 30–50 (ATVLPLILFTIFLTFGLGSLV), 67–87 (IVVAINIVALLGSLFHAQTFF), and 107–127 (IIVLTQWAAVAFISLIVLIVM).

The protein belongs to the FrdC family. Part of an enzyme complex containing four subunits: a flavoprotein (FrdA), an iron-sulfur protein (FrdB), and two hydrophobic anchor proteins (FrdC and FrdD).

It localises to the cell inner membrane. Anchors the catalytic components of the fumarate reductase complex to the cell membrane, binds quinones. The chain is Fumarate reductase subunit C from Vibrio campbellii (strain ATCC BAA-1116).